Reading from the N-terminus, the 253-residue chain is uncharacterized protein (253 aa).

2 C2HC LYAR-type zinc fingers span residues 1–26 and 27–51; these read MVFF…FQCR and NTTF…VKCI. Residues Cys-6, Cys-9, His-21, Cys-25, Cys-32, Cys-35, His-47, and Cys-50 each coordinate Zn(2+). Residues 136-171 are a coiled coil; sequence AAEADKMREEAIRKQEETQKMEKAQKEAAAAAKKET.

It localises to the nucleus. This is an uncharacterized protein from Caenorhabditis elegans.